Reading from the N-terminus, the 307-residue chain is Metapyrocatechase (307 aa).

2 consecutive VOC domains span residues 7–122 (RPGH…LYAD) and 150–269 (RFDH…VFCG). Fe cation is bound by residues histidine 153, histidine 214, and glutamate 265.

It belongs to the extradiol ring-cleavage dioxygenase family. As to quaternary structure, homotetramer. Fe(2+) is required as a cofactor.

It carries out the reaction catechol + O2 = (2Z,4E)-2-hydroxy-6-oxohexa-2,4-dienoate + H(+). It participates in aromatic compound metabolism; benzoate degradation via hydroxylation. The chain is Metapyrocatechase (dmpB) from Pseudomonas sp. (strain CF600).